The following is a 210-amino-acid chain: Calcium-activated potassium channel subunit beta-4 (210 aa).

The Cytoplasmic segment spans residues 1-19 (MAKLRVAYEYTEAEDKSIR). The helical transmembrane segment at 20-40 (LGLFLIISGVVSLFIFGFCWL) threads the bilayer. Residues 41–167 (SPALQDLQAT…DVLLHRTHDE (127 aa)) are Extracellular-facing. N-linked (GlcNAc...) asparagine glycosylation is found at N53 and N90. Residues 168–188 (IVLLHCFLWPLVTFVVGVLIV) form a helical membrane-spanning segment. At 189-210 (VLTICAKSLAVKAEAMKKRKFS) the chain is on the cytoplasmic side.

This sequence belongs to the KCNMB (TC 8.A.14.1) family. KCNMB4 subfamily. Interacts with KCNMA1 tetramer. There are probably 4 molecules of KCMNB4 per KCNMA1 tetramer. Interacts with FMR1 (via N-terminus). Phosphorylated. Phosphorylation modulates its effect on KCNMA1 activation kinetics. Post-translationally, N-glycosylated. A highly glycosylated form is promoted by KCNMA1. Glycosylation, which is not required for the interaction with KCNMA1 and subcellular location, increases protection against charybdotoxin. Predominantly expressed in brain. In brain, it is expressed in the cerebellum, cerebral cortex, medulla, spinal cord, occipital pole, frontal lobe, temporal lobe, putamen, amygdala, caudate nucleus, corpus callosum, hippocampus, substantia nigra and thalamus. Weakly or not expressed in other tissues.

The protein resides in the membrane. Regulatory subunit of the calcium activated potassium KCNMA1 (maxiK) channel. Modulates the calcium sensitivity and gating kinetics of KCNMA1, thereby contributing to KCNMA1 channel diversity. Decreases the gating kinetics and calcium sensitivity of the KCNMA1 channel, but with fast deactivation kinetics. May decrease KCNMA1 channel openings at low calcium concentrations but increases channel openings at high calcium concentrations. Makes KCNMA1 channel resistant to 100 nM charybdotoxin (CTX) toxin concentrations. The protein is Calcium-activated potassium channel subunit beta-4 (KCNMB4) of Homo sapiens (Human).